A 415-amino-acid chain; its full sequence is Multifunctional CCA protein (415 aa).

The ATP site is built by glycine 8 and arginine 11. CTP contacts are provided by glycine 8 and arginine 11. The Mg(2+) site is built by aspartate 21 and aspartate 23. Residues arginine 91, arginine 143, and arginine 146 each contribute to the ATP site. CTP-binding residues include arginine 91, arginine 143, and arginine 146. The region spanning 232–333 is the HD domain; sequence TGVHVMMVID…TRLLERCDAL (102 aa).

The protein belongs to the tRNA nucleotidyltransferase/poly(A) polymerase family. Bacterial CCA-adding enzyme type 1 subfamily. Monomer. Can also form homodimers and oligomers. The cofactor is Mg(2+). Ni(2+) serves as cofactor.

The enzyme catalyses a tRNA precursor + 2 CTP + ATP = a tRNA with a 3' CCA end + 3 diphosphate. It catalyses the reaction a tRNA with a 3' CCA end + 2 CTP + ATP = a tRNA with a 3' CCACCA end + 3 diphosphate. Catalyzes the addition and repair of the essential 3'-terminal CCA sequence in tRNAs without using a nucleic acid template. Adds these three nucleotides in the order of C, C, and A to the tRNA nucleotide-73, using CTP and ATP as substrates and producing inorganic pyrophosphate. tRNA 3'-terminal CCA addition is required both for tRNA processing and repair. Also involved in tRNA surveillance by mediating tandem CCA addition to generate a CCACCA at the 3' terminus of unstable tRNAs. While stable tRNAs receive only 3'-terminal CCA, unstable tRNAs are marked with CCACCA and rapidly degraded. In Cupriavidus pinatubonensis (strain JMP 134 / LMG 1197) (Cupriavidus necator (strain JMP 134)), this protein is Multifunctional CCA protein.